The following is a 280-amino-acid chain: Urease accessory protein UreD (280 aa).

This sequence belongs to the UreD family. UreD, UreF and UreG form a complex that acts as a GTP-hydrolysis-dependent molecular chaperone, activating the urease apoprotein by helping to assemble the nickel containing metallocenter of UreC. The UreE protein probably delivers the nickel.

The protein resides in the cytoplasm. Functionally, required for maturation of urease via the functional incorporation of the urease nickel metallocenter. This Pseudomonas aeruginosa (strain UCBPP-PA14) protein is Urease accessory protein UreD.